Here is a 249-residue protein sequence, read N- to C-terminus: MASSEEDGTNGGASEAGEEKEAPGRRRRLGLLATVWLTFYNIAMTAGWLVLAIAMVRFYMEKGTHKGLYKSIQKTLKFFQTFALLEIVHCLIGIVPTSVIVAGVQVSSRIFMVWLITHSIKPIQNEESVVLFLVAWTVTEITRYSFYTFSLLDHLPYFIKWARYNFFIILYPVGVVGELLTIYAALPYVKKTGMFSIRLPNKYNVSFDYYYFLLITMASYIPLFPQLYFHMLRQRRKVLHGEVIVEKDD.

The tract at residues 1 to 22 (MASSEEDGTNGGASEAGEEKEA) is disordered. Residues 1-36 (MASSEEDGTNGGASEAGEEKEAPGRRRRLGLLATVW) lie on the Cytoplasmic side of the membrane. A helical membrane pass occupies residues 37–56 (LTFYNIAMTAGWLVLAIAMV). Residues 57 to 75 (RFYMEKGTHKGLYKSIQKT) are Lumenal-facing. The helical transmembrane segment at 76–92 (LKFFQTFALLEIVHCLI) threads the bilayer. Topologically, residues 93–102 (GIVPTSVIVA) are cytoplasmic. A helical membrane pass occupies residues 103–120 (GVQVSSRIFMVWLITHSI). Over 121-126 (KPIQNE) the chain is Lumenal. The helical transmembrane segment at 127–141 (ESVVLFLVAWTVTEI) threads the bilayer. Residues 142 to 164 (TRYSFYTFSLLDHLPYFIKWARY) lie on the Cytoplasmic side of the membrane. The helical transmembrane segment at 165 to 182 (NFFIILYPVGVVGELLTI) threads the bilayer. Catalysis depends on residues Tyr171 and Glu178. Topologically, residues 183 to 212 (YAALPYVKKTGMFSIRLPNKYNVSFDYYYF) are lumenal. Asn204 carries an N-linked (GlcNAc...) asparagine glycan. A helical membrane pass occupies residues 213–230 (LLITMASYIPLFPQLYFH). The Cytoplasmic portion of the chain corresponds to 231–249 (MLRQRRKVLHGEVIVEKDD).

Belongs to the very long-chain fatty acids dehydratase HACD family. In terms of assembly, may interact with enzymes of the ELO family (including ELOVL1); with those enzymes that mediate condensation, the first of the four steps of the reaction cycle responsible for fatty acids elongation, may be part of a larger fatty acids elongase complex. Interacts with TECR. As to expression, skeletal muscle.

It localises to the endoplasmic reticulum membrane. It carries out the reaction a very-long-chain (3R)-3-hydroxyacyl-CoA = a very-long-chain (2E)-enoyl-CoA + H2O. The catalysed reaction is (3R)-hydroxyhexadecanoyl-CoA = (2E)-hexadecenoyl-CoA + H2O. It catalyses the reaction (3R)-hydroxyoctadecanoyl-CoA = (2E)-octadecenoyl-CoA + H2O. The enzyme catalyses (3R)-hydroxyeicosanoyl-CoA = (2E)-eicosenoyl-CoA + H2O. It carries out the reaction (3R)-hydroxydocosanoyl-CoA = (2E)-docosenoyl-CoA + H2O. The catalysed reaction is (3R)-hydroxytetracosanoyl-CoA = (2E)-tetracosenoyl-CoA + H2O. It catalyses the reaction (3R)-hydroxyhexacosanoyl-CoA = (2E)-hexacosenoyl-CoA + H2O. It functions in the pathway lipid metabolism; fatty acid biosynthesis. Functionally, catalyzes the third of the four reactions of the long-chain fatty acids elongation cycle. This endoplasmic reticulum-bound enzymatic process, allows the addition of two carbons to the chain of long- and very long-chain fatty acids/VLCFAs per cycle. This enzyme catalyzes the dehydration of the 3-hydroxyacyl-CoA intermediate into trans-2,3-enoyl-CoA, within each cycle of fatty acid elongation. Thereby, it participates in the production of VLCFAs of different chain lengths that are involved in multiple biological processes as precursors of membrane lipids and lipid mediators. The chain is Very-long-chain (3R)-3-hydroxyacyl-CoA dehydratase 1 (HACD1) from Canis lupus familiaris (Dog).